An 87-amino-acid chain; its full sequence is Kappa 1b-bungarotoxin (87 aa).

The first 21 residues, 1 to 21 (MKTLLLTLVVVTIVCLDLGYT), serve as a signal peptide directing secretion. 5 cysteine pairs are disulfide-bonded: C24–C42, C35–C63, C48–C52, C67–C79, and C80–C85.

Belongs to the three-finger toxin family. Long-chain subfamily. Kappa-neurotoxin sub-subfamily. In terms of assembly, homo- and heterodimer; non-covalently linked. Expressed by the venom gland.

It is found in the secreted. Postsynaptic neurotoxin that binds and inhibits neuronal nicotinic acetylcholine receptors (nAChR) with high affinity (IC(50)&lt;100 nM). Is a selective, and slowly reversible antagonist of alpha-3/CHRNA3-containing and some alpha-4/CHRNA4-containing AChRs. The chain is Kappa 1b-bungarotoxin from Bungarus candidus (Malayan krait).